Consider the following 1328-residue polypeptide: Mitogen-activated protein kinase kinase kinase 19 (1328 aa).

The span at methionine 1–histidine 19 shows a compositional bias: basic and acidic residues. 4 disordered regions span residues methionine 1–leucine 28, arginine 44–glutamine 74, valine 344–tyrosine 380, and glutamine 524–lysine 561. Residues valine 344–glutamate 361 show a composition bias toward basic and acidic residues. A compositionally biased stretch (polar residues) spans serine 364–alanine 377. Over residues glutamine 524–threonine 542 the composition is skewed to basic and acidic residues. Residues tryptophan 1061–leucine 1324 enclose the Protein kinase domain. Residues leucine 1067–valine 1075 and lysine 1089 contribute to the ATP site. The active-site Proton acceptor is the aspartate 1186.

This sequence belongs to the protein kinase superfamily. STE Ser/Thr protein kinase family. STE20 subfamily.

The catalysed reaction is L-seryl-[protein] + ATP = O-phospho-L-seryl-[protein] + ADP + H(+). The enzyme catalyses L-threonyl-[protein] + ATP = O-phospho-L-threonyl-[protein] + ADP + H(+). In Homo sapiens (Human), this protein is Mitogen-activated protein kinase kinase kinase 19 (MAP3K19).